Consider the following 74-residue polypeptide: Antimicrobial peptide HsAp1 (74 aa).

The first 21 residues, 1 to 21, serve as a signal peptide directing secretion; it reads MSRRVILTLVLVTILVKTMAG. The propeptide occupies 22–33; the sequence is MESKKVETTDEI. Pro65 is modified (proline amide). Residues 69 to 74 constitute a propeptide that is removed on maturation; sequence AISEQT.

The protein belongs to the non-disulfide-bridged peptide (NDBP) superfamily. Medium-length antimicrobial peptide (group 3) family. As to expression, expressed by the venom gland.

It localises to the secreted. It is found in the target cell membrane. In terms of biological role, possesses antimicrobial activity against both Gram-negative (MIC=23.8-51.2 uM) and Gram-positive (MIC=11.8-46.5 uM) bacteria, as well as against the fungus C.tropicalis (MIC=48.6 uM). Also possesses a relatively high hemolytic activity. May act by disrupting the integrity of the bacterial cell membrane. In Heterometrus spinifer (Asia giant forest scorpion), this protein is Antimicrobial peptide HsAp1.